We begin with the raw amino-acid sequence, 389 residues long: 2-deoxystreptamine N-acetyl-D-glucosaminyltransferase (389 aa).

It belongs to the glycosyltransferase group 1 family.

The catalysed reaction is 2-deoxystreptamine + UDP-N-acetyl-alpha-D-glucosamine = 2'-N-acetylparomamine + UDP + H(+). It participates in antibiotic biosynthesis; butirosin biosynthesis. Glycosyltransferase involved in the biosynthesis of butirosin by mediating conversion of 2-deoxystreptamine (2-DOS) to 2'-N-acetylparomamine using UDP-alpha-D-glucosamine as sugar donor. The protein is 2-deoxystreptamine N-acetyl-D-glucosaminyltransferase (btrM) of Niallia circulans (Bacillus circulans).